Here is a 783-residue protein sequence, read N- to C-terminus: Protein involved in starch initiation 1 (783 aa).

A chloroplast-targeting transit peptide spans 1–27 (MGFSQAIRLNLASFSSPSPCDYCLTRV). 3 coiled-coil regions span residues 128–309 (LHDA…LKEE), 345–432 (LVFS…LELA), and 457–512 (LQEK…LKAL).

As to quaternary structure, interacts with PTST2; the interaction is essential for the initiation of starch granules biosynthesis in leaf chloroplasts. Interacts with SS4; the interaction is essential for the initiation of starch granules biosynthesis in leaf chloroplasts.

It localises to the plastid. The protein localises to the chloroplast. Required for the initiation of starch granules biosynthesis in leaf chloroplasts. Involved in determining starch granule number and size in chloroplasts. This is Protein involved in starch initiation 1 from Arabidopsis thaliana (Mouse-ear cress).